A 217-amino-acid polypeptide reads, in one-letter code: Somatotropin (217 aa).

Residues 1–26 (MMAAGPRTSLLLAFALLCLPWTQVVG) form the signal peptide. Zn(2+) is bound at residue H46. A disulfide bridge links C79 with C190. S132 carries the phosphoserine modification. E199 is a binding site for Zn(2+). The cysteines at positions 207 and 215 are disulfide-linked.

The protein belongs to the somatotropin/prolactin family.

Its subcellular location is the secreted. Its function is as follows. Plays an important role in growth control. Its major role in stimulating body growth is to stimulate the liver and other tissues to secrete IGF1. It stimulates both the differentiation and proliferation of myoblasts. It also stimulates amino acid uptake and protein synthesis in muscle and other tissues. The sequence is that of Somatotropin (GH1) from Bubalus bubalis (Domestic water buffalo).